The sequence spans 307 residues: Farnesol kinase, chloroplastic (307 aa).

The transit peptide at 1 to 65 (MATTSTTTKL…TKIRKSSLAA (65 aa)) directs the protein to the chloroplast. 7 consecutive transmembrane segments (helical) span residues 77-97 (VCAF…WGEI), 116-136 (IGLV…GALF), 137-157 (ASLV…GVYH), 177-194 (GPLY…YYWK), 197-217 (PIAI…DIVG), 237-257 (IGMA…FASF), and 265-285 (GMIL…SLPI).

This sequence belongs to the polyprenol kinase family.

The protein resides in the plastid. It localises to the chloroplast membrane. It carries out the reaction (2E,6E)-farnesol + CTP = (2E,6E)-farnesyl phosphate + CDP + H(+). The catalysed reaction is (2E,6E)-farnesol + ATP = (2E,6E)-farnesyl phosphate + ADP + H(+). It catalyses the reaction (2E)-geraniol + ATP = (2E)-geranyl phosphate + ADP + H(+). The enzyme catalyses (2E,6E,10E)-geranylgeraniol + ATP = (2E,6E,10E)-geranylgeranyl phosphate + ADP + H(+). In terms of biological role, kinase involved in negative regulation of abscisic acid (ABA) signaling. Substrate preference is farnesol &gt; geraniol &gt; geranylgeraniol, but has no activity with farnesyl phosphate. Can use CTP &gt; ATP &gt; GTP = UTP as phosphoryl donor. The chain is Farnesol kinase, chloroplastic from Arabidopsis thaliana (Mouse-ear cress).